Reading from the N-terminus, the 264-residue chain is 3-methyl-2-oxobutanoate hydroxymethyltransferase (264 aa).

Residues aspartate 45 and aspartate 84 each contribute to the Mg(2+) site. 3-methyl-2-oxobutanoate-binding positions include 45–46, aspartate 84, and lysine 112; that span reads DS. A Mg(2+)-binding site is contributed by glutamate 114. Residue glutamate 181 is the Proton acceptor of the active site.

It belongs to the PanB family. As to quaternary structure, homodecamer; pentamer of dimers. Requires Mg(2+) as cofactor.

Its subcellular location is the cytoplasm. It carries out the reaction 3-methyl-2-oxobutanoate + (6R)-5,10-methylene-5,6,7,8-tetrahydrofolate + H2O = 2-dehydropantoate + (6S)-5,6,7,8-tetrahydrofolate. The protein operates within cofactor biosynthesis; (R)-pantothenate biosynthesis; (R)-pantoate from 3-methyl-2-oxobutanoate: step 1/2. In terms of biological role, catalyzes the reversible reaction in which hydroxymethyl group from 5,10-methylenetetrahydrofolate is transferred onto alpha-ketoisovalerate to form ketopantoate. The protein is 3-methyl-2-oxobutanoate hydroxymethyltransferase of Shigella sonnei (strain Ss046).